Reading from the N-terminus, the 502-residue chain is Lysine--tRNA ligase (502 aa).

Residues Met1–Arg22 are disordered. Residues Glu413 and Glu420 each coordinate Mg(2+).

This sequence belongs to the class-II aminoacyl-tRNA synthetase family. Homodimer. Mg(2+) is required as a cofactor.

Its subcellular location is the cytoplasm. The catalysed reaction is tRNA(Lys) + L-lysine + ATP = L-lysyl-tRNA(Lys) + AMP + diphosphate. The polypeptide is Lysine--tRNA ligase (Chromobacterium violaceum (strain ATCC 12472 / DSM 30191 / JCM 1249 / CCUG 213 / NBRC 12614 / NCIMB 9131 / NCTC 9757 / MK)).